The chain runs to 338 residues: Nodulation protein D (338 aa).

In terms of domain architecture, HTH lysR-type spans 6-63; sequence LDLNLLVALDALMTERNLTAAARKINLSQPAMSAAIARLRSYFRDELFTMRGRELVLT. The segment at residues 23–42 is a DNA-binding region (H-T-H motif); that stretch reads LTAAARKINLSQPAMSAAIA.

It belongs to the LysR transcriptional regulatory family.

Its function is as follows. NodD regulates the expression of the nodABCFE genes which encode other nodulation proteins. NodD is also a negative regulator of its own expression. Binds flavonoids as inducers. In Bradyrhizobium sp. (strain ANU 289), this protein is Nodulation protein D (nodD).